A 351-amino-acid polypeptide reads, in one-letter code: AA9 family lytic polysaccharide monooxygenase A (351 aa).

Histidine 1 provides a ligand contact to Cu(2+). An intrachain disulfide couples cysteine 52 to cysteine 178. A glycan (N-linked (GlcNAc...) asparagine) is linked at asparagine 53. Residue histidine 86 coordinates Cu(2+). N-linked (GlcNAc...) asparagine glycosylation is present at asparagine 138. The O2 site is built by histidine 164 and glutamine 173. Tyrosine 175 serves as a coordination point for Cu(2+). Residue serine 280 is the site of GPI-anchor amidated serine attachment. The propeptide at 281–351 is removed in mature form; the sequence is SAIGTSTASS…RSGTLGRLSF (71 aa).

This sequence belongs to the polysaccharide monooxygenase AA9 family. Cu(2+) is required as a cofactor.

Its subcellular location is the cell membrane. The enzyme catalyses [(1-&gt;4)-beta-D-glucosyl]n+m + reduced acceptor + O2 = 4-dehydro-beta-D-glucosyl-[(1-&gt;4)-beta-D-glucosyl]n-1 + [(1-&gt;4)-beta-D-glucosyl]m + acceptor + H2O.. Its function is as follows. Lytic polysaccharide monooxygenase (LPMO) that depolymerizes crystalline and amorphous polysaccharides via the oxidation of scissile alpha- or beta-(1-4)-glycosidic bonds, yielding C1 or C4 oxidation products. Catalysis by LPMOs requires the reduction of the active-site copper from Cu(II) to Cu(I) by a reducing agent and H(2)O(2) or O(2) as a cosubstrate. Has broad specificity, cleaving at any position along the beta-glucan backbone of xyloglucan, regardless of substitutions. Shows minor activity on glucomannan. The polypeptide is AA9 family lytic polysaccharide monooxygenase A (Gloeophyllum trabeum (Brown rot fungus)).